Consider the following 228-residue polypeptide: U1 small nuclear ribonucleoprotein C (228 aa).

The Matrin-type; degenerate zinc-finger motif lies at 11–43 (ATVDYCDIFLTHDSASVRKAHNTGWKHKMQVEH). Residues 83 to 127 (GQRGQPVGGPPRPPQPFHNGGRPGPPGRPPMGMFPPQRPMMPPPH) form a disordered region. Residues 105–127 (PGPPGRPPMGMFPPQRPMMPPPH) show a composition bias toward pro residues.

The protein belongs to the U1 small nuclear ribonucleoprotein C family. As to quaternary structure, U1 snRNP is composed of the 7 core Sm proteins B/B', D1, D2, D3, E, F and G that assemble in a heptameric protein ring on the Sm site of the small nuclear RNA to form the core snRNP, and at least 3 U1 snRNP-specific proteins U1-70K, U1-A and U1-C. U1-C interacts with U1 snRNA and the 5' splice-site region of the pre-mRNA.

It is found in the nucleus. Its function is as follows. Component of the spliceosomal U1 snRNP, which is essential for recognition of the pre-mRNA 5' splice-site and the subsequent assembly of the spliceosome. U1-C is directly involved in initial 5' splice-site recognition for both constitutive and regulated alternative splicing. The interaction with the 5' splice-site seems to precede base-pairing between the pre-mRNA and the U1 snRNA. Stimulates commitment or early (E) complex formation by stabilizing the base pairing of the 5' end of the U1 snRNA and the 5' splice-site region. This Batrachochytrium dendrobatidis (strain JAM81 / FGSC 10211) (Frog chytrid fungus) protein is U1 small nuclear ribonucleoprotein C.